The primary structure comprises 366 residues: Ribosomal RNA large subunit methyltransferase M (366 aa).

S-adenosyl-L-methionine is bound by residues Ser188, 221–224 (CPGG), Asp240, Asp260, and Asp277. Lys306 acts as the Proton acceptor in catalysis.

It belongs to the class I-like SAM-binding methyltransferase superfamily. RNA methyltransferase RlmE family. RlmM subfamily. In terms of assembly, monomer.

It localises to the cytoplasm. The catalysed reaction is cytidine(2498) in 23S rRNA + S-adenosyl-L-methionine = 2'-O-methylcytidine(2498) in 23S rRNA + S-adenosyl-L-homocysteine + H(+). Functionally, catalyzes the 2'-O-methylation at nucleotide C2498 in 23S rRNA. The sequence is that of Ribosomal RNA large subunit methyltransferase M from Salmonella heidelberg (strain SL476).